The sequence spans 167 residues: Signal peptidase complex catalytic subunit SEC11 (167 aa).

Over 1–12 (MNLRLELTRFLK) the chain is Cytoplasmic. The helical; Signal-anchor for type II membrane protein transmembrane segment at 13–30 (LCFVLSSAFMFWKGLSIA) threads the bilayer. Residues 31–167 (TNSHSPIVVV…LGISALLSNE (137 aa)) are Lumenal-facing. Catalysis depends on charge relay system residues Ser-44, His-83, and Asp-109. The interval 153–164 (ALMGFLGISALL) is C-terminal short (CTS) helix.

Belongs to the peptidase S26B family. Component of the signal peptidase complex (SPC) composed of a catalytic subunit SEC11 and three accessory subunits SPC1, SPC2 and SPC3. The complex induces a local thinning of the ER membrane which is used to measure the length of the signal peptide (SP) h-region of protein substrates. This ensures the selectivity of the complex towards h-regions shorter than 18-20 amino acids. SPC associates with the translocon complex.

It localises to the endoplasmic reticulum membrane. The enzyme catalyses Cleavage of hydrophobic, N-terminal signal or leader sequences from secreted and periplasmic proteins.. Its function is as follows. Catalytic component of the signal peptidase complex (SPC) which catalyzes the cleavage of N-terminal signal sequences from nascent proteins as they are translocated into the lumen of the endoplasmic reticulum. Specifically cleaves N-terminal signal peptides that contain a hydrophobic alpha-helix (h-region) shorter than 18-20 amino acids. This is Signal peptidase complex catalytic subunit SEC11 (SEC11) from Zygosaccharomyces rouxii (strain ATCC 2623 / CBS 732 / NBRC 1130 / NCYC 568 / NRRL Y-229).